The following is a 909-amino-acid chain: Golgin subfamily A member 6-like protein 2 (909 aa).

The span at 1–11 shows a compositional bias: pro residues; that stretch reads MWPQPHLPPHP. Disordered regions lie at residues 1 to 88, 300 to 362, 381 to 408, 425 to 494, and 524 to 909; these read MWPQ…ASHQ, ERLR…EQEE, QEKQ…RLRE, KMRE…QRLP, and EEMW…QSSL. Positions 13–31 are enriched in basic and acidic residues; sequence MSEKTRQNKLAEAKKKFTD. Residues 53 to 77 show a composition bias toward polar residues; the sequence is NNGTNPETTTSEGCHSPEDTQQNRA. The segment covering 78–88 has biased composition (basic and acidic residues); sequence QLKEEKKASHQ. Residues 192–526 are a coiled coil; sequence HKKADRYIEE…EEKIRDQEEM (335 aa). 2 stretches are compositionally biased toward basic and acidic residues: residues 425-478 and 524-542; these read KMRE…KQEE and EEMW…MREQ. The span at 607–620 shows a compositional bias: acidic residues; sequence AGGEEDAGAGEEDM. Composition is skewed to gly residues over residues 641 to 654 and 676 to 689; these read GGGG…GEDA and GAGG…GEDV. The span at 692–719 shows a compositional bias: basic residues; the sequence is GRRRCGSSRGCRNRRRSCGNTRRCRSRR. The segment covering 746–755 has biased composition (low complexity); sequence AGAEDVAAGG. The span at 757–766 shows a compositional bias: acidic residues; it reads DAGEEEDAGG. Residues 791–871 show a composition bias toward gly residues; that stretch reads GAGGEDVGAG…AGGEDVGAGG (81 aa). The span at 872–892 shows a compositional bias: basic and acidic residues; sequence DAREGGEDTRSEREDAGEAAR.

Belongs to the GOLGA6 family.

The chain is Golgin subfamily A member 6-like protein 2 (GOLGA6L2) from Homo sapiens (Human).